A 286-amino-acid polypeptide reads, in one-letter code: NFU1 iron-sulfur cluster scaffold homolog, mitochondrial (286 aa).

A mitochondrion-targeting transit peptide spans 1 to 66; it reads MSKLLTNTAL…RQIQLSGARN (66 aa). Residues 182–250 are nifU; sequence IKELLDTRIR…IPEVESVEQV (69 aa). [4Fe-4S] cluster contacts are provided by Cys219 and Cys222.

It belongs to the NifU family.

Its subcellular location is the mitochondrion. In terms of biological role, molecular scaffold for [Fe-S] cluster assembly of mitochondrial iron-sulfur proteins. This Drosophila ananassae (Fruit fly) protein is NFU1 iron-sulfur cluster scaffold homolog, mitochondrial.